The chain runs to 129 residues: Fluoride-specific ion channel FluC (129 aa).

4 helical membrane passes run 1-21 (MLMK…LGSA), 35-55 (GGLP…IGFI), 71-91 (LFLV…IFEN), and 105-125 (AYLA…TFFA). Gly79 and Thr82 together coordinate Na(+).

It belongs to the fluoride channel Fluc/FEX (TC 1.A.43) family.

It localises to the cell inner membrane. The enzyme catalyses fluoride(in) = fluoride(out). With respect to regulation, na(+) is not transported, but it plays an essential structural role and its presence is essential for fluoride channel function. In terms of biological role, fluoride-specific ion channel. Important for reducing fluoride concentration in the cell, thus reducing its toxicity. In Chlorobium phaeobacteroides (strain DSM 266 / SMG 266 / 2430), this protein is Fluoride-specific ion channel FluC.